Consider the following 474-residue polypeptide: Protein FAM161A (474 aa).

Disordered regions lie at residues 78–126 (SSSS…PGEI), 185–210 (QKRREKASDAQETREKMLKRNEDDAE), and 308–364 (REEL…DQGL). A coiled-coil region spans residues 188–250 (REKASDAQET…KKTRERSKAA (63 aa)). The interval 274–454 (KLRELCRAKK…PTASSRGREQ (181 aa)) is required for interaction with CFAP418. Over residues 325 to 335 (LQSSPWPSHST) the composition is skewed to polar residues. Glycyl lysine isopeptide (Lys-Gly) (interchain with G-Cter in SUMO2) cross-links involve residues lysine 397 and lysine 413. Residues 412–474 (LKETRRPNPS…KELARIGGAR (63 aa)) form a disordered region. Over residues 422 to 431 (PRHKSPRRSA) the composition is skewed to basic residues. A compositionally biased stretch (basic and acidic residues) spans 450-468 (RGREQAIRRSEKARMKELA).

The protein belongs to the FAM161 family. In terms of assembly, interacts (via central region) with CFAP418 (via N-terminus); the interaction is direct. Interacts (via C-terminus) with microtubules. Interacts with LCA5. Interacts with CEP290. Interacts with SDCCAG8. Interacts with FAM161B. Interacts with POC1B. Interacts with CEP78. Forms a microtubule-associated complex with POC5, CETN2 and POC1B. Interacts with CCDC15. Expressed in the retina and kidney.

The protein resides in the cytoplasm. It localises to the cytoskeleton. It is found in the cilium basal body. Its subcellular location is the cell projection. The protein localises to the cilium. The protein resides in the microtubule organizing center. It localises to the centrosome. It is found in the centriole. Functionally, involved in ciliogenesis. In Rattus norvegicus (Rat), this protein is Protein FAM161A.